A 959-amino-acid polypeptide reads, in one-letter code: E3 ubiquitin-protein ligase arkadia-B (959 aa).

Polar residues predominate over residues 51 to 66 (CSDTNKQQSDLNSNGT). Disordered regions lie at residues 51 to 171 (CSDT…VSSL), 189 to 212 (RKRF…MLQR), and 225 to 271 (LLPS…SGGM). Residues 112-131 (SSFSDCISSPSSSSHFGDSD) are compositionally biased toward low complexity. Residues 142 to 156 (PLSSVNSTPRTQSAR) show a composition bias toward polar residues. Low complexity predominate over residues 228–246 (SSSSSSENDLSSESSSSSS). Residues 256-267 (TGENRQDGTTLP) show a composition bias toward polar residues. The SUMO interaction motif 1 (SIM) motif lies at 275–279 (VVVIE). Positions 300 to 306 (EVEIVTV) match the SUMO interaction motif 2 (SIM) motif. The interval 318 to 341 (HPRSHWGQNSQSGRTQEQRTRNRV) is disordered. Residues 323–332 (WGQNSQSGRT) are compositionally biased toward polar residues. An SUMO interaction motif 3 (SIM) motif is present at residues 355-359 (VVDLT). Over residues 370–397 (TTSGRVESQPVSIVSSLTSTSEPASDSM) the composition is skewed to polar residues. Disordered stretches follow at residues 370-399 (TTSG…SMSG), 475-499 (HFPH…SFRD), 615-649 (PRPL…MDYV), and 661-680 (PSLT…HLSA). Positions 475-487 (HFPHHHHHHHHSS) are enriched in basic residues. Positions 620–632 (HQTSSCPHSNSAS) are enriched in polar residues. Pro residues predominate over residues 633-646 (QPPPPPPPPPPPPM). The interval 872-874 (YPH) is ubiquitin binding. Cys-907 and Cys-910 together coordinate Zn(2+). The RING-type; atypical zinc finger occupies 907–948 (CTICLSILEEGEDVRRLPCMHLFHQVCVDQWLITNKKCPICR). The segment at 922 to 926 (RLPCM) is ubiquitin binding. The Zn(2+) site is built by His-930 and Cys-933.

It belongs to the Arkadia family. In terms of assembly, monomer.

Its subcellular location is the nucleus. The protein resides in the cytoplasm. It is found in the PML body. The enzyme catalyses S-ubiquitinyl-[E2 ubiquitin-conjugating enzyme]-L-cysteine + [acceptor protein]-L-lysine = [E2 ubiquitin-conjugating enzyme]-L-cysteine + N(6)-ubiquitinyl-[acceptor protein]-L-lysine.. It participates in protein modification; protein ubiquitination. With respect to regulation, binds free ubiquitin non-covalently via its RING-type zinc finger. Ubiquitin-binding leads to enhance the E3 ubiquitin-protein ligase activity by stabilizing the ubiquitin-conjugating enzyme E2 (donor ubiquitin) in the 'closed' conformation and activating ubiquitin transfer. Functionally, E3 ubiquitin-protein ligase required for mesoderm patterning during embryonic development. Acts as an enhancer of the transcriptional responses of the smad2/smad3 effectors, which are activated downstream of BMP. Acts by mediating ubiquitination and degradation of SMAD inhibitors such as smad7, inducing their proteasomal degradation and thereby enhancing the transcriptional activity of TGF-beta and BMP. Specifically binds polysumoylated chains via SUMO interaction motifs (SIMs) and mediates ubiquitination of sumoylated substrates. The regulation of the BMP-SMAD signaling is however independent of sumoylation and is not dependent of SUMO interaction motifs (SIMs). The chain is E3 ubiquitin-protein ligase arkadia-B (rnf111-b) from Xenopus laevis (African clawed frog).